A 274-amino-acid polypeptide reads, in one-letter code: Bis(5'-nucleosyl)-tetraphosphatase, symmetrical (274 aa).

This sequence belongs to the Ap4A hydrolase family.

The enzyme catalyses P(1),P(4)-bis(5'-adenosyl) tetraphosphate + H2O = 2 ADP + 2 H(+). Its function is as follows. Hydrolyzes diadenosine 5',5'''-P1,P4-tetraphosphate to yield ADP. The sequence is that of Bis(5'-nucleosyl)-tetraphosphatase, symmetrical from Shewanella baltica (strain OS155 / ATCC BAA-1091).